The primary structure comprises 166 residues: UPF0304 protein VS_1049 (166 aa).

It belongs to the UPF0304 family.

The protein is UPF0304 protein VS_1049 of Vibrio atlanticus (strain LGP32) (Vibrio splendidus (strain Mel32)).